The primary structure comprises 123 residues: Small ribosomal subunit protein uS12cz/uS12cy (123 aa).

The protein belongs to the universal ribosomal protein uS12 family. Part of the 30S ribosomal subunit.

The protein resides in the plastid. It localises to the chloroplast. With S4 and S5 plays an important role in translational accuracy. Located at the interface of the 30S and 50S subunits. In Nandina domestica (Heavenly bamboo), this protein is Small ribosomal subunit protein uS12cz/uS12cy (rps12-A).